The chain runs to 594 residues: MKSYSQFNLNAAAPPAIAYETTVVNPNGSPLDPHQQQQQQSQDMPHFGLPGPQPPSSQQQQQQLQVHHQQQQQQQQQQQQQQHQQQMQMSLLPGPYRPHIEEKKLTRDAMEKYMRERNDMVIVILHAKVAQKSYGNEKRFFCPPPCIYLFGSGWRRRYEEMLQQGEGEQGAQLCAFIGIGSSDQDMQQLDLNGKQYCAAKTLFISDSDKRKHFMLSVKMFYGNGHDIGVFNSKRIKVISKPSKKKQSLKNADLCIASGTNVALFNRLRSQTVSTRYLHVENGHFHASSTQWGAFTIHLLDDNESESEEFQVRDGYIHYGATVKLVCSVTGMALPRLIIRKVDKQMALLEADDPVSQLHKCAFYMKDTDRMYLCLSQEKIIQFQATPCPKEPNKEMINDGACWTIISTDKAEYQFYEGMGPVASPVTPVPIVNSLNLNGGGDVAMLELSGDNFTPHLQVWFGDVEAETMYRCTETLLCVVPEISQFRGEWLWVRQPTQVPISLVRNDGIIYATGLTFTYTPEPGPRPHCNTQAEDVMRARQNNNNNNITSISNNNNSNNAGSPAAGGGLQQQQQQHQALPSISEVQWNSHGSGLS.

The segment at 20–87 is disordered; it reads ETTVVNPNGS…QQQQQHQQQM (68 aa). The segment covering 58–87 has biased composition (low complexity); the sequence is QQQQQQLQVHHQQQQQQQQQQQQQQHQQQM. DNA-binding regions lie at residues 131–141, 239–244, and 266–271; these read QKSYGNEKRFF, SKPSKK, and RLRSQT. The IPT/TIG domain maps to 429-519; it reads PIVNSLNLNG…YATGLTFTYT (91 aa). 2 stretches are compositionally biased toward low complexity: residues 542–562 and 569–580; these read NNNNNITSISNNNNSNNAGSP and QQQQQQHQALPS. Residues 542-594 are disordered; that stretch reads NNNNNITSISNNNNSNNAGSPAAGGGLQQQQQQHQALPSISEVQWNSHGSGLS. The span at 582-594 shows a compositional bias: polar residues; that stretch reads SEVQWNSHGSGLS.

It belongs to the Su(H) family. In terms of assembly, interacts with activated cleaved Notch. Interacts with Hairless, this interaction preventing its DNA-binding activity. Interacts with insv (via BEN domain).

Its subcellular location is the nucleus. It localises to the cytoplasm. Its function is as follows. Transcriptional regulator that plays a central role in Notch signaling, a signaling pathway involved in cell-cell communication that regulates a broad spectrum of cell-fate determinations. Binds directly the 5'-GTGRGAR-3' DNA consensus sequence, which is present in the regulatory region of several genes. Acts as a transcriptional repressor when it is not associated with Notch proteins. When associated with some Notch protein, it acts as a transcriptional activator that activates transcription of Notch target genes. Required for transcription of Sim. Specifically binds to the immunoglobulin kappa-type J segment recombination signal sequence. Required for neurogenesis in imaginal disks. In the larval brain, might play a role as a transducer of Notch signaling during type II neuroblast development. Also functions independently of the Notch pathway, in the development of the bristle sensory organ precursor cell. The protein is Suppressor of hairless protein (Su(H)) of Drosophila melanogaster (Fruit fly).